Reading from the N-terminus, the 2587-residue chain is Fap1 adhesin (2587 aa).

Residues 1–85 form the signal peptide; the sequence is MGKYKRAGET…ATVVSGNVFA (85 aa). Disordered stretches follow at residues 107–158, 173–212, 515–539, and 568–2558; these read SSEN…SESV, SISESVSESTSTSIVLSESGAASGNKATSKGTEEKQDSVR, DSIPSDTTSQSESTSKSESTSKSIS, and ESIT…GENV. Residues 107–195 are ser-rich region 1, SRR1; it reads SSENFDSEKA…IVLSESGAAS (89 aa). Composition is skewed to low complexity over residues 121–158 and 173–191; these read SLSQSESASESVSESISESVSESVSTSESVSESVSESV and SISESVSESTSTSIVLSES. Positions 191 to 522 are sufficient to block adherence to beads; that stretch reads SGAASGNKAT…NADSIPSDTT (332 aa). Residues 192–202 are compositionally biased toward polar residues; sequence GAASGNKATSK. Residues 203 to 212 are compositionally biased toward basic and acidic residues; sequence GTEEKQDSVR. The interval 516–2561 is ser-rich region 2, SRR2; that stretch reads SIPSDTTSQS…PNTGENVSSS (2046 aa). 2 stretches are compositionally biased toward low complexity: residues 519 to 539 and 568 to 2545; these read SDTTSQSESTSKSESTSKSIS and ESIT…VSES. A required for localization to cell wall, fimbriae formation and adherence to saliva-coated hydroxyapatite beads (SHA) but not secretion region spans residues 2367–2587; it reads SESISESVSE…RKKRKSEDAE (221 aa). An LPXTG sorting signal motif is present at residues 2551-2555; that stretch reads LPNTG. Threonine 2554 carries the pentaglycyl murein peptidoglycan amidated threonine modification. Residues 2555 to 2587 constitute a propeptide, removed by sortase; sequence GENVSSSLGLVGLSGLLFGALLGRKKRKSEDAE.

Belongs to the serine-rich repeat protein (SRRP) family. Glycosylated; occurs within the cytoplasm. It is probable that most of the Ser residues in SSR1 and SSR2 are O-GlcNAcylated. Sequential glycosylation by sugar transferases are able to generate complex sugar polymorphisms.

The protein resides in the cytoplasm. Its subcellular location is the secreted. It localises to the cell wall. The protein localises to the fimbrium. In terms of biological role, the major structural element of fimbriae. Required for adherence to saliva-coated hydroxyapatite beads (SHA), an in vitro tooth model. A Fap1-dependent increase in adherence is seen as the pH is reduced from pH 8 to pH 5. The sequence is that of Fap1 adhesin (fap1) from Streptococcus parasanguinis.